Here is an 831-residue protein sequence, read N- to C-terminus: Leucine--tRNA ligase (831 aa).

A 'HIGH' region motif is present at residues 35 to 45; sequence PYPSGKIHVGH. The 'KMSKS' region motif lies at 600 to 604; that stretch reads KMSKS. Lysine 603 provides a ligand contact to ATP.

This sequence belongs to the class-I aminoacyl-tRNA synthetase family.

The protein resides in the cytoplasm. The enzyme catalyses tRNA(Leu) + L-leucine + ATP = L-leucyl-tRNA(Leu) + AMP + diphosphate. The protein is Leucine--tRNA ligase of Rickettsia bellii (strain RML369-C).